We begin with the raw amino-acid sequence, 389 residues long: tRNA-specific 2-thiouridylase MnmA (389 aa).

Residues 9 to 16 (GMSGGVDS) and methionine 35 each bind ATP. Residues 95–97 (NPD) are interaction with target base in tRNA. Cysteine 100 functions as the Nucleophile in the catalytic mechanism. Cysteines 100 and 196 form a disulfide. Residue glycine 124 coordinates ATP. Positions 146–148 (KDQ) are interaction with tRNA. The active-site Cysteine persulfide intermediate is the cysteine 196. Residues 308-309 (RY) form an interaction with tRNA region.

This sequence belongs to the MnmA/TRMU family.

It is found in the cytoplasm. It catalyses the reaction S-sulfanyl-L-cysteinyl-[protein] + uridine(34) in tRNA + AH2 + ATP = 2-thiouridine(34) in tRNA + L-cysteinyl-[protein] + A + AMP + diphosphate + H(+). Functionally, catalyzes the 2-thiolation of uridine at the wobble position (U34) of tRNA, leading to the formation of s(2)U34. The protein is tRNA-specific 2-thiouridylase MnmA of Burkholderia ambifaria (strain MC40-6).